The sequence spans 162 residues: Cyclic pyranopterin monophosphate synthase (162 aa).

Substrate-binding positions include 75–77 (MCH) and 116–117 (ME). Residue Asp131 is part of the active site.

The protein belongs to the MoaC family. Homohexamer; trimer of dimers.

The enzyme catalyses (8S)-3',8-cyclo-7,8-dihydroguanosine 5'-triphosphate = cyclic pyranopterin phosphate + diphosphate. It functions in the pathway cofactor biosynthesis; molybdopterin biosynthesis. Functionally, catalyzes the conversion of (8S)-3',8-cyclo-7,8-dihydroguanosine 5'-triphosphate to cyclic pyranopterin monophosphate (cPMP). The polypeptide is Cyclic pyranopterin monophosphate synthase (Staphylococcus epidermidis (strain ATCC 35984 / DSM 28319 / BCRC 17069 / CCUG 31568 / BM 3577 / RP62A)).